Here is a 182-residue protein sequence, read N- to C-terminus: ATP-dependent protease subunit HslV (182 aa).

The active site involves T10. Residues A166, C169, and S172 each contribute to the Na(+) site.

The protein belongs to the peptidase T1B family. HslV subfamily. As to quaternary structure, a double ring-shaped homohexamer of HslV is capped on each side by a ring-shaped HslU homohexamer. The assembly of the HslU/HslV complex is dependent on binding of ATP.

The protein localises to the cytoplasm. It catalyses the reaction ATP-dependent cleavage of peptide bonds with broad specificity.. With respect to regulation, allosterically activated by HslU binding. In terms of biological role, protease subunit of a proteasome-like degradation complex believed to be a general protein degrading machinery. The chain is ATP-dependent protease subunit HslV from Rickettsia felis (strain ATCC VR-1525 / URRWXCal2) (Rickettsia azadi).